We begin with the raw amino-acid sequence, 451 residues long: Runt-related transcription factor 1 (451 aa).

The interval 1 to 37 (MRIPVDASTSRRFTPPSTALSPGKMSEALPLGAPDGG) is disordered. Positions 7–20 (ASTSRRFTPPSTAL) are enriched in polar residues. Residue threonine 14 is modified to Phosphothreonine. Serine 21 bears the Phosphoserine mark. Residues lysine 24 and lysine 43 each carry the N6-acetyllysine modification. Positions 50–178 (SMVEVLADHP…TVDGPREPRR (129 aa)) constitute a Runt domain. The interaction with DNA stretch occupies residues 80-84 (RCNKT). Chloride contacts are provided by asparagine 112, glutamate 116, arginine 139, and valine 170. Interaction with DNA stretches follow at residues 135–143 (RFVGRSGRG) and 168–177 (ITVDGPREPR). Disordered stretches follow at residues 170-195 (VDGP…LSFS) and 209-252 (MRVS…SPPW). Residues serine 193 and serine 212 each carry the phosphoserine modification. A compositionally biased stretch (polar residues) spans 222 to 247 (PRASLNHSTAFNPQPQSQMQDARQIQ). The residue at position 249 (serine 249) is a Phosphoserine; by HIPK2. 2 positions are modified to phosphoserine: serine 266 and serine 268. The segment at 268–290 (SVHPATPISPGRASGMTSLSAEL) is disordered. Threonine 273 carries the phosphothreonine; by HIPK2 modification. A Phosphoserine; by HIPK2 modification is found at serine 276. The tract at residues 291-370 (SSRLSTAPDL…SQAQAGPFQT (80 aa)) is interaction with KAT6A. The residue at position 296 (threonine 296) is a Phosphothreonine. The tract at residues 307–399 (RQFPTLPSIS…MVGGERSPPR (93 aa)) is interaction with KAT6B. The interval 361 to 401 (SQAQAGPFQTGSPSYHLYYGASAGSYQFSMVGGERSPPRIL) is interaction with FOXP3. Residues 406–451 (NASTGAALLNPSLPSQSDVVETEGSHSNSPTNMPPARLEEAVWRPY) are disordered. A compositionally biased stretch (polar residues) spans 417–436 (SLPSQSDVVETEGSHSNSPT). Phosphoserine is present on serine 434. Basic and acidic residues predominate over residues 442–451 (RLEEAVWRPY).

As to quaternary structure, heterodimer with CBFB. RUNX1 binds DNA as a monomer and through the Runt domain. DNA-binding is increased by heterodimerization. Interacts with TLE1 and ALYREF/THOC4. Interacts with HIPK2, ELF1, ELF2 and SPI1. Interacts via its Runt domain with the ELF4 N-terminal region. Interaction with ELF2 isoform 2 (NERF-1a) may act to repress RUNX1-mediated transactivation. Interacts with KAT6A and KAT6B. Interacts with SUV39H1, leading to abrogation of transactivating and DNA-binding properties of RUNX1. Interacts with YAP1. Interaction with CDK6 prevents myeloid differentiation, reducing its transcription transactivation activity. Found in a complex with PRMT5, RUNX1 and CBFB. Interacts with FOXP3. Interacts with TBX21. Interacts with DPF2. Phosphorylated in its C-terminus upon IL-6 treatment. Phosphorylation enhances interaction with KAT6A. In terms of processing, methylated. Post-translationally, phosphorylated in Ser-249 Thr-273 and Ser-276 by HIPK2 when associated with CBFB and DNA. This phosphorylation promotes subsequent EP300 phosphorylation. Isoform 4 is expressed at high levels in thymus, spleen and T-cell lines and at lower levels in myeloid cell lines and nonhematopoietic cells. Isoform 5 is expressed ubiquitously in lumbar vertebrae, brain, kidney, heart, muscle, ovary and osteoblast-like cell line MC3T3-E1.

It is found in the nucleus. Its function is as follows. Forms the heterodimeric complex core-binding factor (CBF) with CBFB. RUNX members modulate the transcription of their target genes through recognizing the core consensus binding sequence 5'-TGTGGT-3', or very rarely, 5'-TGCGGT-3', within their regulatory regions via their runt domain, while CBFB is a non-DNA-binding regulatory subunit that allosterically enhances the sequence-specific DNA-binding capacity of RUNX. The heterodimers bind to the core site of a number of enhancers and promoters, including murine leukemia virus, polyomavirus enhancer, T-cell receptor enhancers, LCK, IL3 and GM-CSF promoters. Essential for the development of normal hematopoiesis. Acts synergistically with ELF4 to transactivate the IL-3 promoter and with ELF2 to transactivate the BLK promoter. Inhibits KAT6B-dependent transcriptional activation. Involved in lineage commitment of immature T cell precursors. CBF complexes repress ZBTB7B transcription factor during cytotoxic (CD8+) T cell development. They bind to RUNX-binding sequence within the ZBTB7B locus acting as transcriptional silencer and allowing for cytotoxic T cell differentiation. CBF complexes binding to the transcriptional silencer is essential for recruitment of nuclear protein complexes that catalyze epigenetic modifications to establish epigenetic ZBTB7B silencing. Controls the anergy and suppressive function of regulatory T-cells (Treg) by associating with FOXP3. Activates the expression of IL2 and IFNG and down-regulates the expression of TNFRSF18, IL2RA and CTLA4, in conventional T-cells. Positively regulates the expression of RORC in T-helper 17 cells. Functionally, isoform 4 shows higher binding activities for target genes and binds TCR-beta-E2 and RAG-1 target site with threefold higher affinity than other isoforms. It is less effective in the context of neutrophil terminal differentiation. The chain is Runt-related transcription factor 1 (Runx1) from Mus musculus (Mouse).